Reading from the N-terminus, the 228-residue chain is uncharacterized protein (228 aa).

This is an uncharacterized protein from Methanocaldococcus jannaschii (strain ATCC 43067 / DSM 2661 / JAL-1 / JCM 10045 / NBRC 100440) (Methanococcus jannaschii).